The chain runs to 436 residues: Drebrin-like protein (436 aa).

An ADF-H domain is found at A2–A133. T26 is modified (phosphothreonine). S160 carries the phosphoserine modification. Position 176 is an N6-acetyllysine (K176). A coiled-coil region spans residues F179–A233. Composition is skewed to basic and acidic residues over residues K185–R229 and H264–A275. A disordered region spans residues K185–E341. Residues M276–P286 are compositionally biased toward polar residues. S277, S280, S283, and S291 each carry phosphoserine. Residues L294–T303 show a composition bias toward polar residues. The residue at position 296 (K296) is an N6-acetyllysine. A Phosphothreonine modification is found at T299. 2 positions are modified to phosphotyrosine: Y340 and Y350. The SH3 domain occupies G377–E436.

Belongs to the ABP1 family. Interacts with SHANK3, SYN1 and PRAM1. Interacts with SHANK2. Interacts with FGD1, DNM1 and MAP4K1. Interacts with ANKRD54. Interacts with COBL. Interacts with WASL and WIPF1. As to expression, detected in hippocampus neurons and in the Purkinje cell layer in cerebellum (at protein level). Predominantly expressed in brain, thymus and spleen. Also found in testis, heart and lung. Little or no expression detected in ovary or muscle.

It localises to the cytoplasm. It is found in the cytoskeleton. The protein localises to the cell projection. The protein resides in the lamellipodium. Its subcellular location is the ruffle. It localises to the cell cortex. It is found in the cytosol. The protein localises to the synapse. The protein resides in the perikaryon. Its subcellular location is the neuron projection. It localises to the cell membrane. It is found in the cytoplasmic vesicle. The protein localises to the clathrin-coated vesicle membrane. The protein resides in the golgi apparatus membrane. Its subcellular location is the podosome. It localises to the early endosome. It is found in the dendrite. The protein localises to the postsynaptic density. In terms of biological role, adapter protein that binds F-actin and DNM1, and thereby plays a role in receptor-mediated endocytosis. Plays a role in the reorganization of the actin cytoskeleton, formation of cell projections, such as neurites, in neuron morphogenesis and synapse formation via its interaction with WASL and COBL. Does not bind G-actin and promote actin polymerization by itself. Required for the formation of organized podosome rosettes. May act as a common effector of antigen receptor-signaling pathways in leukocytes. Acts as a key component of the immunological synapse that regulates T-cell activation by bridging TCRs and the actin cytoskeleton to gene activation and endocytic processes. This is Drebrin-like protein from Mus musculus (Mouse).